The chain runs to 372 residues: GTPase Obg (372 aa).

One can recognise an Obg domain in the interval methionine 1 to methionine 159. Residues glycine 121–alanine 141 are disordered. The region spanning alanine 160–aspartate 329 is the OBG-type G domain. Residues glycine 166 to serine 173, phenylalanine 191 to glutamate 195, aspartate 213 to glycine 216, asparagine 280 to aspartate 283, and serine 310 to isoleucine 312 contribute to the GTP site. Residues serine 173 and threonine 193 each contribute to the Mg(2+) site. The tract at residues glutamine 346 to glutamate 372 is disordered.

Belongs to the TRAFAC class OBG-HflX-like GTPase superfamily. OBG GTPase family. In terms of assembly, monomer. Mg(2+) serves as cofactor.

Its subcellular location is the cytoplasm. An essential GTPase which binds GTP, GDP and possibly (p)ppGpp with moderate affinity, with high nucleotide exchange rates and a fairly low GTP hydrolysis rate. Plays a role in control of the cell cycle, stress response, ribosome biogenesis and in those bacteria that undergo differentiation, in morphogenesis control. This is GTPase Obg from Desulfotalea psychrophila (strain LSv54 / DSM 12343).